Here is a 126-residue protein sequence, read N- to C-terminus: Fluoride-specific ion channel FluC (126 aa).

Transmembrane regions (helical) follow at residues 6 to 26 (FVAVGVGAAAGAWLRWGFSVL), 36 to 56 (YGTLAANLLGGYLIGLAVGFF), 69 to 89 (LAITGFLGGLTTFSTFSSEVV), and 99 to 119 (WAAMHLLLHLGGSLLLTALGL). Na(+) contacts are provided by glycine 76 and threonine 79.

The protein belongs to the fluoride channel Fluc/FEX (TC 1.A.43) family.

The protein localises to the cell inner membrane. The catalysed reaction is fluoride(in) = fluoride(out). With respect to regulation, na(+) is not transported, but it plays an essential structural role and its presence is essential for fluoride channel function. Its function is as follows. Fluoride-specific ion channel. Important for reducing fluoride concentration in the cell, thus reducing its toxicity. This Cupriavidus taiwanensis (strain DSM 17343 / BCRC 17206 / CCUG 44338 / CIP 107171 / LMG 19424 / R1) (Ralstonia taiwanensis (strain LMG 19424)) protein is Fluoride-specific ion channel FluC.